A 194-amino-acid polypeptide reads, in one-letter code: 7-methyl-GTP pyrophosphatase (194 aa).

Residue Asp-69 is the Proton acceptor of the active site.

Belongs to the Maf family. YceF subfamily. A divalent metal cation is required as a cofactor.

Its subcellular location is the cytoplasm. It carries out the reaction N(7)-methyl-GTP + H2O = N(7)-methyl-GMP + diphosphate + H(+). Functionally, nucleoside triphosphate pyrophosphatase that hydrolyzes 7-methyl-GTP (m(7)GTP). May have a dual role in cell division arrest and in preventing the incorporation of modified nucleotides into cellular nucleic acids. This Sodalis glossinidius (strain morsitans) protein is 7-methyl-GTP pyrophosphatase.